We begin with the raw amino-acid sequence, 108 residues long: RNA silencing suppressor (108 aa).

The segment at 47–50 (RRRR) is basic. Residues 57 to 78 (CHRCYRLWPPTVFTTRCDNKYC) form a C4-type zinc finger.

Belongs to the carlaviruses nucleic acid-binding protein family.

In terms of biological role, suppressor of viral-induced RNA silencing. The potential mechanism of action is based on sequestering siRNAs. This Solanum tuberosum (Potato) protein is RNA silencing suppressor.